The chain runs to 710 residues: Ferrioxamine receptor (710 aa).

The N-terminal stretch at 1–26 (MFSAFIIKRSAILCSLAMFIPLASIA) is a signal peptide. The TonB box signature appears at 28–35 (DTIEVTAK). 30 consecutive transmembrane segments (beta stranded) span residues 29-37 (TIEVTAKAG), 65-73 (TAQSVSVVT), 91-99 (YTPGVFTGF), 106-114 (YDTVALRGF), 137-145 (NVLQVDPWF), 152-160 (IKGPSSALY), 180-188 (SEGHFRLTA), 194-202 (QVAAFDYTD), 208-216 (WAFRLTGIT), 259-267 (GGYHSAVPA), 271-279 (IYGQKLSRG), 293-301 (WQQIYSYEF), 309-317 (WSFRQNASY), 353-361 (FAVDNQLEA), 370-378 (HKVLLGVDF), 427-435 (YEQSGVYLQ), 443-451 (WHLNLSGRY), 476-484 (GRASLLYSF), 491-499 (YVSYSQAIT), 517-525 (EQYEVGIIY), 531-539 (TSLYSAALY), 555-563 (YYVPAGKVN), 567-575 (LELEARSQI), 579-587 (LSVIAGYTY), 610-618 (NMASLWAQY), 624-632 (INVGAGIRY), 649-657 (YTLGDASVR), 671-679 (FVQLNVNNI), 684-692 (YVAACYSTS), and 702-710 (VQATVGYDF). The 114-residue stretch at 61–174 (PLILTAQSVS…PGGVVMMTSK (114 aa)) folds into the TBDR plug domain. Positions 181-710 (EGHFRLTAGN…SVQATVGYDF (530 aa)) constitute a TBDR beta-barrel domain. The TonB C-terminal box signature appears at 693 to 710 (YCYWGAERSVQATVGYDF).

It belongs to the TonB-dependent receptor family.

Its subcellular location is the cell outer membrane. Ferrioxamine binding and uptake, in association with the TonB protein. The protein is Ferrioxamine receptor (foxA) of Yersinia enterocolitica.